Here is a 137-residue protein sequence, read N- to C-terminus: uncharacterized protein (137 aa).

This is an uncharacterized protein from Rickettsia prowazekii (strain Madrid E).